The sequence spans 142 residues: Ribosome-binding factor A (142 aa).

Residues 123 to 142 form a disordered region; the sequence is VQRDLDSAPEDDEPETGTGH. Acidic residues predominate over residues 129–142; that stretch reads SAPEDDEPETGTGH.

It belongs to the RbfA family. As to quaternary structure, monomer. Binds 30S ribosomal subunits, but not 50S ribosomal subunits or 70S ribosomes.

The protein resides in the cytoplasm. Its function is as follows. One of several proteins that assist in the late maturation steps of the functional core of the 30S ribosomal subunit. Associates with free 30S ribosomal subunits (but not with 30S subunits that are part of 70S ribosomes or polysomes). Required for efficient processing of 16S rRNA. May interact with the 5'-terminal helix region of 16S rRNA. This is Ribosome-binding factor A from Methylobacterium radiotolerans (strain ATCC 27329 / DSM 1819 / JCM 2831 / NBRC 15690 / NCIMB 10815 / 0-1).